The sequence spans 263 residues: Imidazole glycerol phosphate synthase subunit HisF (263 aa).

Residues D11 and D130 contribute to the active site.

The protein belongs to the HisA/HisF family. Heterodimer of HisH and HisF.

It localises to the cytoplasm. The catalysed reaction is 5-[(5-phospho-1-deoxy-D-ribulos-1-ylimino)methylamino]-1-(5-phospho-beta-D-ribosyl)imidazole-4-carboxamide + L-glutamine = D-erythro-1-(imidazol-4-yl)glycerol 3-phosphate + 5-amino-1-(5-phospho-beta-D-ribosyl)imidazole-4-carboxamide + L-glutamate + H(+). It functions in the pathway amino-acid biosynthesis; L-histidine biosynthesis; L-histidine from 5-phospho-alpha-D-ribose 1-diphosphate: step 5/9. Functionally, IGPS catalyzes the conversion of PRFAR and glutamine to IGP, AICAR and glutamate. The HisF subunit catalyzes the cyclization activity that produces IGP and AICAR from PRFAR using the ammonia provided by the HisH subunit. The protein is Imidazole glycerol phosphate synthase subunit HisF of Herpetosiphon aurantiacus (strain ATCC 23779 / DSM 785 / 114-95).